A 134-amino-acid chain; its full sequence is ATP synthase epsilon chain (134 aa).

Belongs to the ATPase epsilon chain family. As to quaternary structure, F-type ATPases have 2 components, CF(1) - the catalytic core - and CF(0) - the membrane proton channel. CF(1) has five subunits: alpha(3), beta(3), gamma(1), delta(1), epsilon(1). CF(0) has three main subunits: a, b and c.

The protein localises to the cell inner membrane. In terms of biological role, produces ATP from ADP in the presence of a proton gradient across the membrane. In Sinorhizobium medicae (strain WSM419) (Ensifer medicae), this protein is ATP synthase epsilon chain.